Consider the following 483-residue polypeptide: Protein PLASTID TRANSCRIPTIONALLY ACTIVE 14 (483 aa).

A chloroplast-targeting transit peptide spans 1–62 (MASSVSLQFL…TQPFPLFQSP (62 aa)). Residues 80 to 325 (YKIGYVRSVR…KGEEMTINYM (246 aa)) enclose the SET domain. Residue tyrosine 324 participates in S-adenosyl-L-methionine binding.

It belongs to the class V-like SAM-binding methyltransferase superfamily. As to quaternary structure, component of the transcriptionally active chromosome (TAC) complexes. Interacts with PTAC12/HMR/PAP5 and PTAC7. Binds to SL1/MTERF3. As to expression, mostly expressed in leaves, flowers and seedlings, and, to a lower extent, in stems and roots.

It localises to the plastid. It is found in the chloroplast thylakoid. Essential for chloroplast development, especially for thylakoid formation. Involved in plastid gene expression, probably by maintaining plastid-encoded RNA polymerase (PEP) activity. The polypeptide is Protein PLASTID TRANSCRIPTIONALLY ACTIVE 14 (Arabidopsis thaliana (Mouse-ear cress)).